The primary structure comprises 201 residues: IMP cyclohydrolase (201 aa).

This sequence belongs to the archaeal IMP cyclohydrolase family.

It catalyses the reaction IMP + H2O = 5-formamido-1-(5-phospho-D-ribosyl)imidazole-4-carboxamide. Its pathway is purine metabolism; IMP biosynthesis via de novo pathway; IMP from 5-formamido-1-(5-phospho-D-ribosyl)imidazole-4-carboxamide: step 1/1. Its function is as follows. Catalyzes the cyclization of 5-formylamidoimidazole-4-carboxamide ribonucleotide to IMP. The sequence is that of IMP cyclohydrolase from Methanococcus maripaludis (strain C6 / ATCC BAA-1332).